We begin with the raw amino-acid sequence, 344 residues long: Ferrochelatase (344 aa).

Fe cation-binding residues include His214 and Glu295.

This sequence belongs to the ferrochelatase family.

The protein localises to the cytoplasm. The catalysed reaction is heme b + 2 H(+) = protoporphyrin IX + Fe(2+). It functions in the pathway porphyrin-containing compound metabolism; protoheme biosynthesis; protoheme from protoporphyrin-IX: step 1/1. Functionally, catalyzes the ferrous insertion into protoporphyrin IX. This Rhizobium leguminosarum bv. trifolii (strain WSM2304) protein is Ferrochelatase.